The primary structure comprises 553 residues: Dihydroxy-acid dehydratase (553 aa).

A Mg(2+)-binding site is contributed by D78. A [2Fe-2S] cluster-binding site is contributed by C119. Mg(2+) contacts are provided by D120 and K121. K121 carries the post-translational modification N6-carboxylysine. C192 is a [2Fe-2S] cluster binding site. E442 is a binding site for Mg(2+). The active-site Proton acceptor is S468.

The protein belongs to the IlvD/Edd family. Homodimer. The cofactor is [2Fe-2S] cluster. It depends on Mg(2+) as a cofactor.

The catalysed reaction is (2R)-2,3-dihydroxy-3-methylbutanoate = 3-methyl-2-oxobutanoate + H2O. The enzyme catalyses (2R,3R)-2,3-dihydroxy-3-methylpentanoate = (S)-3-methyl-2-oxopentanoate + H2O. It participates in amino-acid biosynthesis; L-isoleucine biosynthesis; L-isoleucine from 2-oxobutanoate: step 3/4. It functions in the pathway amino-acid biosynthesis; L-valine biosynthesis; L-valine from pyruvate: step 3/4. Functions in the biosynthesis of branched-chain amino acids. Catalyzes the dehydration of (2R,3R)-2,3-dihydroxy-3-methylpentanoate (2,3-dihydroxy-3-methylvalerate) into 2-oxo-3-methylpentanoate (2-oxo-3-methylvalerate) and of (2R)-2,3-dihydroxy-3-methylbutanoate (2,3-dihydroxyisovalerate) into 2-oxo-3-methylbutanoate (2-oxoisovalerate), the penultimate precursor to L-isoleucine and L-valine, respectively. The sequence is that of Dihydroxy-acid dehydratase from Campylobacter hominis (strain ATCC BAA-381 / DSM 21671 / CCUG 45161 / LMG 19568 / NCTC 13146 / CH001A).